The chain runs to 200 residues: 3-isopropylmalate dehydratase small subunit (200 aa).

This sequence belongs to the LeuD family. LeuD type 1 subfamily. As to quaternary structure, heterodimer of LeuC and LeuD.

It catalyses the reaction (2R,3S)-3-isopropylmalate = (2S)-2-isopropylmalate. It participates in amino-acid biosynthesis; L-leucine biosynthesis; L-leucine from 3-methyl-2-oxobutanoate: step 2/4. Catalyzes the isomerization between 2-isopropylmalate and 3-isopropylmalate, via the formation of 2-isopropylmaleate. This Actinobacillus pleuropneumoniae serotype 3 (strain JL03) protein is 3-isopropylmalate dehydratase small subunit.